The sequence spans 617 residues: Phosphatidylinositol-3,5-bisphosphate 3-phosphatase MTMR6 (617 aa).

The GRAM domain occupies Met1–Gln101. Positions Glu2–Asn141 are interaction with RAB1B. Tyr108 is modified (phosphotyrosine). Residues Gly124–Tyr499 form the Myotubularin phosphatase domain. A 1,2-diacyl-sn-glycero-3-phospho-(1D-myo-inositol-3,5-bisphosphate)-binding residues include Asn248, Asn273, and Ile274. Positions 248, 273, and 274 each coordinate a 1,2-diacyl-sn-glycero-3-phospho-(1D-myo-inositol-3-phosphate). Cys336 (phosphocysteine intermediate) is an active-site residue. A 1,2-diacyl-sn-glycero-3-phospho-(1D-myo-inositol-3,5-bisphosphate) is bound by residues Ser337, Asp338, Gly339, Trp340, Asp341, Arg342, Lys378, and Arg382. A 1,2-diacyl-sn-glycero-3-phospho-(1D-myo-inositol-3-phosphate) contacts are provided by Ser337, Asp338, Gly339, Trp340, Asp341, and Arg342. Residue Arg382 coordinates a 1,2-diacyl-sn-glycero-3-phospho-(1D-myo-inositol-3-phosphate). Residues Ser557, Ser585, and Ser607 each carry the phosphoserine modification.

This sequence belongs to the protein-tyrosine phosphatase family. Non-receptor class myotubularin subfamily. Homodimer. Heterodimer (via C-terminus) with MTMR9 (via C-terminus). Interacts with ALKBH4. Interacts with KCNN4. Interacts (via GRAM domain) with RAB1B (in GDP-bound form); the interaction regulates MTMR6 recruitment to the endoplasmic reticulum-Golgi intermediate compartment. As to expression, isoform 1: Ubiquitously expressed including in heart, brain, spleen, lung, liver, muscle, kidney and testis (at protein level). Isoform 2: Expressed in testis (at protein level).

It localises to the cytoplasm. The protein localises to the endoplasmic reticulum-Golgi intermediate compartment. Its subcellular location is the cell projection. The protein resides in the ruffle membrane. It is found in the endoplasmic reticulum. It catalyses the reaction a 1,2-diacyl-sn-glycero-3-phospho-(1D-myo-inositol-3,5-bisphosphate) + H2O = a 1,2-diacyl-sn-glycero-3-phospho-(1D-myo-inositol-5-phosphate) + phosphate. The catalysed reaction is a 1,2-diacyl-sn-glycero-3-phospho-(1D-myo-inositol-3-phosphate) + H2O = a 1,2-diacyl-sn-glycero-3-phospho-(1D-myo-inositol) + phosphate. It carries out the reaction 1,2-dioctanoyl-sn-glycero-3-phospho-(1D-myo-inositol-3,5-bisphosphate) + H2O = 1,2-dioctanoyl-sn-glycero-3-phospho-(1D-myo-inositol-5-phosphate) + phosphate. The enzyme catalyses 1,2-dioctanoyl-sn-glycero-3-phospho-(1-D-myo-inositol-3-phosphate) + H2O = 1,2-dioctanoyl-sn-glycero-3-phospho-(1D-myo-inositol) + phosphate. Allosterically activated by phosphatidylserine and/or phosphatidylinositol 4-phosphate (PtdIns(4)P), and phosphatidylinositol 5-phosphate (PtdIns(5)P). Interaction with MTMR9 increases catalytic activity towards phosphatidylinositol 3,5-bisphosphate. Lipid phosphatase that specifically dephosphorylates the D-3 position of phosphatidylinositol 3-phosphate and phosphatidylinositol 3,5-bisphosphate, generating phosphatidylinositol and phosphatidylinositol 5-phosphate. Binds with high affinity to phosphatidylinositol 3,5-bisphosphate (PtdIns(3,5)P2) but also to phosphatidylinositol 3-phosphate (PtdIns(3)P), phosphatidylinositol 4-phosphate (PtdIns(4)P), and phosphatidylinositol 5-phosphate (PtdIns(5)P), phosphatidic acid and phosphatidylserine. Negatively regulates ER-Golgi protein transport. Probably in association with MTMR9, plays a role in the late stages of macropinocytosis by dephosphorylating phosphatidylinositol 3-phosphate in membrane ruffles. Acts as a negative regulator of KCNN4/KCa3.1 channel activity in CD4(+) T-cells possibly by decreasing intracellular levels of phosphatidylinositol 3-phosphate. Negatively regulates proliferation of reactivated CD4(+) T-cells. In complex with MTMR9, negatively regulates DNA damage-induced apoptosis. The formation of the MTMR6-MTMR9 complex stabilizes both MTMR6 and MTMR9 protein levels. In Mus musculus (Mouse), this protein is Phosphatidylinositol-3,5-bisphosphate 3-phosphatase MTMR6.